Consider the following 448-residue polypeptide: Adenylosuccinate synthetase (448 aa).

GTP-binding positions include 22–28 and 50–52; these read GDEGKGK and GHT. Asp23 serves as the catalytic Proton acceptor. Asp23 and Gly50 together coordinate Mg(2+). Residues 23-26, 48-51, Thr139, Arg153, Gln234, Thr249, and Arg321 contribute to the IMP site; these read DEGK and NAGH. His51 functions as the Proton donor in the catalytic mechanism. Position 317 to 323 (317 to 323) interacts with substrate; sequence SVTGRPR. Residues Arg323, 349 to 351, and 431 to 433 each bind GTP; these read KLD and STG.

This sequence belongs to the adenylosuccinate synthetase family. In terms of assembly, homodimer. Requires Mg(2+) as cofactor.

The protein localises to the cytoplasm. It catalyses the reaction IMP + L-aspartate + GTP = N(6)-(1,2-dicarboxyethyl)-AMP + GDP + phosphate + 2 H(+). Its pathway is purine metabolism; AMP biosynthesis via de novo pathway; AMP from IMP: step 1/2. Plays an important role in the de novo pathway of purine nucleotide biosynthesis. Catalyzes the first committed step in the biosynthesis of AMP from IMP. The polypeptide is Adenylosuccinate synthetase (Burkholderia mallei (strain NCTC 10247)).